Here is a 486-residue protein sequence, read N- to C-terminus: MKKLLRLFFPLSLRVRFLLATAAVVLVLSLAYGMVALIGYSVSFDKTTFRLLRGESNLFYTLAKWENNKLHVELPENIDKQSPTMTLIYDENGQLLWAQRDVPWLMKMIQPDWLKSNGFHEIEADVNDTSLLLSGDHSIQQQLQEVREDDDDAEMTHSVAVNVYPATSRMPKLTIVVVDTIPVELKSSYMVWSWFIYVLSANLLLVIPLLWVAAWWSLRPIEALAKEVRELEEHNRELLNPATTRELTSLVRNLNRLLKSERERYDKYRTTLTDLTHSLKTPLAVLQSTLRSLRSEKMSVSDAEPVMLEQISRISQQIGYYLHRASMRGGTLLSRELHPVAPLLDNLTSALNKVYQRKGVNISLDISPEISFVGEQNDFVEVMGNVLDNACKYCLEFVEISARQTDEHLYIVVEDDGPGIPLSKREVIFDRGQRVDTLRPGQGVGLAVAREITEQYEGKIVAGESMLGGARMEVIFGRQHSAPKDE.

The Cytoplasmic portion of the chain corresponds to Met1–Arg16. The helical transmembrane segment at Phe17 to Leu37 threads the bilayer. At Ile38–Trp194 the chain is on the periplasmic side. The a divalent metal cation site is built by Asp151 and Asp152. The helical transmembrane segment at Phe195 to Trp215 threads the bilayer. The 52-residue stretch at Trp215–Asp266 folds into the HAMP domain. Residues Trp216 to Glu486 lie on the Cytoplasmic side of the membrane. The Histidine kinase domain occupies Asp274–His480. His277 is subject to Phosphohistidine; by autocatalysis. Residue Asn385 coordinates Mg(2+). ATP is bound by residues Asn385–Tyr393, Asp415–Ile420, and Arg434–Leu446. Gln442 is a binding site for Mg(2+).

Homodimer; probably dimerizes via the cytoplasmic domain. Probably interacts with MgrB in the periplasm, altering its activity and that of downstream effector PhoP.

It is found in the cell inner membrane. The catalysed reaction is ATP + protein L-histidine = ADP + protein N-phospho-L-histidine.. Its activity is regulated as follows. Acetyl-CoA acts as a non-competitive inhibitor of the PhoQ autokinase activity. Feedback inhibited by MgrB, which seems to bind PhoQ, altering its activity and that of downstream effector PhoP. In terms of biological role, member of the two-component regulatory system PhoP/PhoQ involved in adaptation to low Mg(2+) environments and the control of acid resistance genes. In low periplasmic Mg(2+), PhoQ functions as a membrane-associated protein kinase that undergoes autophosphorylation and subsequently transfers the phosphate to PhoP, resulting in the expression of PhoP-activated genes (PAG) and repression of PhoP-repressed genes (PRG). In high periplasmic Mg(2+), acts as a protein phosphatase that dephosphorylates phospho-PhoP, resulting in the repression of PAG and may lead to expression of some PRG. PhoP-regulated transcription is redox-sensitive, being activated when the periplasm becomes more reducing (deletion of dsbA/dsbB, or treatment with dithiothreitol). MgrB acts between DsbA/DsbB and PhoP/PhoQ in this pathway; the 2 periplasmic Cys residues of MgrB are required for its action on PhoQ, which then acts on PhoP. Mediates magnesium influx to the cytosol by activation of mgtA. Promotes expression of the two-component regulatory system rstA/rstB and transcription of the hemL, mgrB, nagA, slyB, vboR and yrbL genes. This is Sensor protein PhoQ (phoQ) from Escherichia coli (strain K12).